The primary structure comprises 642 residues: Threonine--tRNA ligase (642 aa).

One can recognise a TGS domain in the interval 1-61; sequence MPVITLPDGS…ENDATLAIIT (61 aa). The catalytic stretch occupies residues 243-534; that stretch reads DHRKIGKQLD…LTEEFAGFFP (292 aa). Zn(2+) contacts are provided by Cys-334, His-385, and His-511.

This sequence belongs to the class-II aminoacyl-tRNA synthetase family. Homodimer. It depends on Zn(2+) as a cofactor.

It is found in the cytoplasm. It carries out the reaction tRNA(Thr) + L-threonine + ATP = L-threonyl-tRNA(Thr) + AMP + diphosphate + H(+). In terms of biological role, catalyzes the attachment of threonine to tRNA(Thr) in a two-step reaction: L-threonine is first activated by ATP to form Thr-AMP and then transferred to the acceptor end of tRNA(Thr). Also edits incorrectly charged L-seryl-tRNA(Thr). This chain is Threonine--tRNA ligase, found in Salmonella dublin (strain CT_02021853).